We begin with the raw amino-acid sequence, 189 residues long: Cancer/testis antigen family 45 member A10 (189 aa).

Belongs to the CT45 family.

The protein resides in the nucleus. The chain is Cancer/testis antigen family 45 member A10 from Homo sapiens (Human).